The primary structure comprises 248 residues: Trypsin I-P1 (248 aa).

The first 15 residues, 1–15, serve as a signal peptide directing secretion; sequence MKFLVLVAFVGVTVA. Residues 16 to 25 constitute a propeptide, activation peptide; that stretch reads FPISDEDDDK. The Peptidase S1 domain maps to 26-246; sequence IVGGYSCARS…YVSWIKTTMS (221 aa). 6 cysteine pairs are disulfide-bonded: Cys32/Cys162, Cys50/Cys66, Cys134/Cys235, Cys141/Cys208, Cys173/Cys187, and Cys198/Cys222. His65 serves as the catalytic Charge relay system. Residues Glu77, Asn79, and Glu87 each contribute to the Ca(2+) site. The active-site Charge relay system is Asp109. Residue Ser202 is the Charge relay system of the active site.

It belongs to the peptidase S1 family. It depends on Ca(2+) as a cofactor. As to expression, high levels are seen in the pancreas while lower levels are found in the liver, spleen and thymus.

The protein localises to the secreted. Its subcellular location is the extracellular space. It carries out the reaction Preferential cleavage: Arg-|-Xaa, Lys-|-Xaa.. The protein is Trypsin I-P1 of Gallus gallus (Chicken).